The primary structure comprises 306 residues: tRNA dimethylallyltransferase (306 aa).

2-9 (GPTASGKT) contributes to the ATP binding site. 4–9 (TASGKT) lines the substrate pocket. Interaction with substrate tRNA stretches follow at residues 27–30 (DSVQ) and 152–156 (QRIVR).

Belongs to the IPP transferase family. As to quaternary structure, monomer. It depends on Mg(2+) as a cofactor.

It catalyses the reaction adenosine(37) in tRNA + dimethylallyl diphosphate = N(6)-dimethylallyladenosine(37) in tRNA + diphosphate. Its function is as follows. Catalyzes the transfer of a dimethylallyl group onto the adenine at position 37 in tRNAs that read codons beginning with uridine, leading to the formation of N6-(dimethylallyl)adenosine (i(6)A). In Magnetococcus marinus (strain ATCC BAA-1437 / JCM 17883 / MC-1), this protein is tRNA dimethylallyltransferase.